The following is a 1254-amino-acid chain: NPC intracellular cholesterol transporter 1 homolog 1b (1254 aa).

The signal sequence occupies residues 1–16; the sequence is MKVIFATIWLIAGAWS. Over 17-272 the chain is Extracellular; the sequence is QSAEQLGCIW…WKIAGLYGVT (256 aa). Disulfide bonds link cysteine 24–cysteine 81, cysteine 62–cysteine 116, cysteine 82–cysteine 120, cysteine 104–cysteine 241, cysteine 107–cysteine 161, cysteine 178–cysteine 186, cysteine 231–cysteine 246, and cysteine 243–cysteine 250. N-linked (GlcNAc...) asparagine glycosylation is found at asparagine 123 and asparagine 132. A helical transmembrane segment spans residues 273 to 293; that stretch reads FILALIIACALSFFIFWGAFG. The Cytoplasmic portion of the chain corresponds to 294-325; sequence KTSAPSVCMPTLFGEFFYHGFRIWGTFCAKHP. A helical transmembrane segment spans residues 326-346; it reads VIVLALCSWAIAGLSFGIRYM. The Extracellular segment spans residues 347–593; sequence TITTDPVELW…AIVELSEGEV (247 aa). N-linked (GlcNAc...) asparagine glycosylation is present at asparagine 389. An intrachain disulfide couples cysteine 438 to cysteine 454. Asparagine 479 carries N-linked (GlcNAc...) asparagine glycosylation. The cysteines at positions 491 and 500 are disulfide-linked. In terms of domain architecture, SSD spans 592–757; it reads EVSTVVISYV…ITAFVALMAI (166 aa). The helical transmembrane segment at 594 to 614 threads the bilayer; that stretch reads STVVISYVVMFVYVAIALGHI. At 615–625 the chain is on the cytoplasmic side; sequence RSCRGFLRESR. Residues 626–646 traverse the membrane as a helical segment; sequence IMLAIGGIVIVLASVVCSLGF. Topologically, residues 647-657 are extracellular; it reads WGYLDVTTTML. The chain crosses the membrane as a helical span at residues 658-678; sequence AIEVIPFLVLAVGVDNIFIMV. At 679–736 the chain is on the cytoplasmic side; it reads HTYQRLDHSKFKTTHEAIGEAIGQVGPSILQTAGSEMACFAIGCISDMPAVKTFAMYA. The helical transmembrane segment at 737–757 threads the bilayer; the sequence is AIAILLDFLLQITAFVALMAI. Residues 758 to 815 lie on the Extracellular side of the membrane; that stretch reads DEKRYLDGRLDMLCCVKSGGKKINDEDGDGVDRPKEVGLLETLFKNFYSPFLLSKPVK. Residues 816–836 traverse the membrane as a helical segment; it reads VSVLLIFTVITCLSLMVTPSI. Residues 837 to 857 are Cytoplasmic-facing; sequence EKGLDQEMSMPKNSHVVKYFR. The chain crosses the membrane as a helical span at residues 858–878; it reads YMVDLLAMGAPVYWVLKPGLN. At 879 to 1079 the chain is on the extracellular side; it reads YSEPLQQNLI…EQYLTIWGDA (201 aa). Cysteine 889 and cysteine 894 are disulfide-bonded. 2 N-linked (GlcNAc...) asparagine glycosylation sites follow: asparagine 896 and asparagine 939. Intrachain disulfides connect cysteine 935–cysteine 990, cysteine 936–cysteine 958, and cysteine 946–cysteine 955. A helical transmembrane segment spans residues 1080-1100; it reads MFSLGMSLVAIFLVTLLITGL. Over 1101-1105 the chain is Cytoplasmic; that stretch reads DITST. A helical transmembrane segment spans residues 1106–1126; that stretch reads FIVLFMVICILINMLGMMWAW. Residues 1127–1132 are Extracellular-facing; it reads SINLNA. The chain crosses the membrane as a helical span at residues 1133-1153; the sequence is ISLVNLVVCVGIGVEFVAHIV. At 1154 to 1174 the chain is on the cytoplasmic side; sequence RSFKRAEGTAQERARHSLNVT. Residues 1175–1195 form a helical membrane-spanning segment; sequence GSSVLSGITLTKFAGIVVLGF. At 1196–1207 the chain is on the extracellular side; it reads SNSQIFQVFYFR. A helical membrane pass occupies residues 1208-1228; sequence MYLGIVLIGAAHGLILLPVLL. The Cytoplasmic portion of the chain corresponds to 1229–1254; that stretch reads SLLGPPQKLARSSGAEPTASITITTN.

The protein belongs to the patched family. In terms of tissue distribution, expressed in the midgut.

It localises to the cell membrane. The catalysed reaction is cholesterol(in) = cholesterol(out). In terms of biological role, important for cholesterol absorption at the midgut epithelium. Acts only in the early steps of sterol absorption, prior to Npc1a-dependent intracellular sterol trafficking. The polypeptide is NPC intracellular cholesterol transporter 1 homolog 1b (Drosophila melanogaster (Fruit fly)).